A 345-amino-acid polypeptide reads, in one-letter code: N-acetyl-gamma-glutamyl-phosphate reductase (345 aa).

Cys149 is a catalytic residue.

It belongs to the NAGSA dehydrogenase family. Type 1 subfamily.

It is found in the cytoplasm. The catalysed reaction is N-acetyl-L-glutamate 5-semialdehyde + phosphate + NADP(+) = N-acetyl-L-glutamyl 5-phosphate + NADPH + H(+). The protein operates within amino-acid biosynthesis; L-arginine biosynthesis; N(2)-acetyl-L-ornithine from L-glutamate: step 3/4. Its function is as follows. Catalyzes the NADPH-dependent reduction of N-acetyl-5-glutamyl phosphate to yield N-acetyl-L-glutamate 5-semialdehyde. In Geobacillus stearothermophilus (Bacillus stearothermophilus), this protein is N-acetyl-gamma-glutamyl-phosphate reductase.